We begin with the raw amino-acid sequence, 182 residues long: Adenine phosphoribosyltransferase (182 aa).

This sequence belongs to the purine/pyrimidine phosphoribosyltransferase family. In terms of assembly, homodimer.

The protein localises to the cytoplasm. The catalysed reaction is AMP + diphosphate = 5-phospho-alpha-D-ribose 1-diphosphate + adenine. It participates in purine metabolism; AMP biosynthesis via salvage pathway; AMP from adenine: step 1/1. Its function is as follows. Catalyzes a salvage reaction resulting in the formation of AMP, that is energically less costly than de novo synthesis. This Koribacter versatilis (strain Ellin345) protein is Adenine phosphoribosyltransferase.